The chain runs to 165 residues: Ribosome maturation factor RimM (165 aa).

The PRC barrel domain occupies 94-165; sequence EDEFYIADLT…YVILNYQREA (72 aa).

This sequence belongs to the RimM family. Binds ribosomal protein uS19.

The protein resides in the cytoplasm. An accessory protein needed during the final step in the assembly of 30S ribosomal subunit, possibly for assembly of the head region. Essential for efficient processing of 16S rRNA. May be needed both before and after RbfA during the maturation of 16S rRNA. It has affinity for free ribosomal 30S subunits but not for 70S ribosomes. The chain is Ribosome maturation factor RimM from Rickettsia rickettsii (strain Sheila Smith).